We begin with the raw amino-acid sequence, 122 residues long: Large ribosomal subunit protein uL14 (122 aa).

It belongs to the universal ribosomal protein uL14 family. In terms of assembly, part of the 50S ribosomal subunit. Forms a cluster with proteins L3 and L19. In the 70S ribosome, L14 and L19 interact and together make contacts with the 16S rRNA in bridges B5 and B8.

Binds to 23S rRNA. Forms part of two intersubunit bridges in the 70S ribosome. This Oenococcus oeni (strain ATCC BAA-331 / PSU-1) protein is Large ribosomal subunit protein uL14.